A 533-amino-acid polypeptide reads, in one-letter code: UDP-glucuronosyltransferase 1A1 (533 aa).

The signal sequence occupies residues 1–25; the sequence is MAVESQGGRPLVLGLLLCVLGPVVS. Asn-102, Asn-295, and Asn-347 each carry an N-linked (GlcNAc...) asparagine glycan. A helical membrane pass occupies residues 491–507; sequence VIGFLLAVVLTVAFITF.

The protein belongs to the UDP-glycosyltransferase family. Homodimer. Homooligomer. Interacts with UGT1A3, UGT1A4, UGT1A6, UGT1A7, UGT1A8, UGT1A9 and UGT1A10 to form heterodimers. Isoform 1 interacts with isoform 2/i2 suggesting that oligomerization is involved in negative regulation of transferase activity by isoform 2. Isoform 1 also interacts with respective i2 isoforms of UGT1A3, UGT1A4, UGT1A6, UGT1A7, UGT1A8, UGT1A9 and UGT1A10. Expressed in liver, colon and small intestine. Not expressed in kidney, esophagus and skin. As to expression, expressed in liver, colon, small intestine and kidney. Not expressed in esophagus and skin.

The protein localises to the endoplasmic reticulum membrane. Its subcellular location is the cytoplasm. It localises to the perinuclear region. It carries out the reaction glucuronate acceptor + UDP-alpha-D-glucuronate = acceptor beta-D-glucuronoside + UDP + H(+). The catalysed reaction is 17beta-estradiol + UDP-alpha-D-glucuronate = 17beta-estradiol 3-O-(beta-D-glucuronate) + UDP + H(+). It catalyses the reaction 2-hydroxyestrone + UDP-alpha-D-glucuronate = 2-hydroxyestrone 3-O-(beta-D-glucuronate) + UDP + H(+). The enzyme catalyses 2-hydroxy-17beta-estradiol + UDP-alpha-D-glucuronate = 2-hydroxy-17beta-estradiol 3-O-(beta-D-glucuronate) + UDP + H(+). It carries out the reaction 2-methoxy-17beta-estradiol + UDP-alpha-D-glucuronate = 2-methoxy-17beta-estradiol 3-O-(beta-D-glucuronate) + UDP + H(+). The catalysed reaction is 17alpha-estradiol + UDP-alpha-D-glucuronate = 17alpha-estradiol 3-O-(beta-D-glucuronate) + UDP + H(+). It catalyses the reaction 16beta,17beta-estriol + UDP-alpha-D-glucuronate = 16beta,17beta-estriol 16-O-(beta-D-glucuronate) + UDP + H(+). The enzyme catalyses losartan + UDP-alpha-D-glucuronate = losartan-2-N-beta-D-glucuronide + UDP. It carries out the reaction prunetin + UDP-alpha-D-glucuronate = prunetin-4'-O-beta-D-glucuronide + UDP. The catalysed reaction is SN-38 + UDP-alpha-D-glucuronate = SN-38 O-beta-D-glucuronide + UDP + H(+). It catalyses the reaction (4Z,15Z)-bilirubin IXalpha + UDP-alpha-D-glucuronate = (4Z,15Z)-bilirubin IXalpha C12-beta-D-glucuronoside + UDP. The enzyme catalyses (4Z,15Z)-bilirubin IXalpha + UDP-alpha-D-glucuronate = (4Z,15Z)-bilirubin IXalpha C8-beta-D-glucuronoside + UDP. It carries out the reaction (4Z,15Z)-bilirubin IXalpha C8-beta-D-glucuronoside + UDP-alpha-D-glucuronate = (4Z,15Z)-bilirubin IXalpha C8,C12-beta-D-bisglucuronoside + UDP. The catalysed reaction is (4Z,15Z)-bilirubin IXalpha C12-beta-D-glucuronoside + UDP-alpha-D-glucuronate = (4Z,15Z)-bilirubin IXalpha C8,C12-beta-D-bisglucuronoside + UDP. It catalyses the reaction 8-iso-prostaglandin F2alpha + UDP-alpha-D-glucuronate = 8-iso-prostaglandin F2alpha-glucuronide + UDP + H(+). The enzyme catalyses (5Z,8Z,11Z,14Z)-eicosatetraenoate + UDP-alpha-D-glucuronate = O-[(5Z),(8Z),(11Z),(14Z)-eicosatetraenoyl]-beta-D-glucuronate + UDP. It carries out the reaction 15-hydroxy-(5Z,8Z,11Z,13E)-eicosatetraenoate + UDP-alpha-D-glucuronate = 15-O-(beta-D-glucuronosyl)-(5Z,8Z,11Z,14Z)-eicosatetraenoate + UDP + H(+). The catalysed reaction is 20-hydroxy-(5Z,8Z,11Z,14Z)-eicosatetraenoate + UDP-alpha-D-glucuronate = 20-O-(beta-D-glucuronosyl)-(5Z,8Z,11Z,14Z)-eicosatetraenoate + UDP + H(+). It catalyses the reaction prostaglandin B1 + UDP-alpha-D-glucuronate = 15-O-(beta-D-glucuronosyl)-prostaglandin B1 + UDP + H(+). The enzyme catalyses (E)-ferulate + UDP-alpha-D-glucuronate = (E)-4-O-(beta-D-glucuronosyl)-ferulate + UDP + H(+). It carries out the reaction (E)-ferulate + UDP-alpha-D-glucuronate = (E)-ferulic acid beta-D-glucuronate ester + UDP. UDP-glucuronosyltransferase (UGT) that catalyzes phase II biotransformation reactions in which lipophilic substrates are conjugated with glucuronic acid to increase the metabolite's water solubility, thereby facilitating excretion into either the urine or bile. Essential for the elimination and detoxification of drugs, xenobiotics and endogenous compounds. Catalyzes the glucuronidation of endogenous estrogen hormones such as estradiol, estrone and estriol. Involved in the glucuronidation of bilirubin, a degradation product occurring in the normal catabolic pathway that breaks down heme in vertebrates. Involved in the glucuronidation of arachidonic acid (AA) and AA-derived eicosanoids including 15-HETE, 20-HETE, PGB1 and F2-isoprostane (8-iso-PGF2alpha). Involved in the glucuronidation of the phytochemical ferulic acid at the phenolic or the carboxylic acid group. Also catalyzes the glucuronidation the isoflavones genistein, daidzein, glycitein, formononetin, biochanin A and prunetin, which are phytoestrogens with anticancer and cardiovascular properties. Involved in the glucuronidation of the AGTR1 angiotensin receptor antagonist losartan, a drug which can inhibit the effect of angiotensin II. Involved in the biotransformation of 7-ethyl-10-hydroxycamptothecin (SN-38), the pharmacologically active metabolite of the anticancer drug irinotecan. Its function is as follows. Lacks UGT glucuronidation activity but acts as a negative regulator of isoform 1. The chain is UDP-glucuronosyltransferase 1A1 from Homo sapiens (Human).